Reading from the N-terminus, the 493-residue chain is Geraniol 8-hydroxylase (493 aa).

Over 1 to 6 the chain is Lumenal; sequence MDYLTI. A helical membrane pass occupies residues 7 to 23; the sequence is ILTLLFALTLYEAFSYL. Over 24–493 the chain is Cytoplasmic; that stretch reads SRRTKNLPPG…HPLRAVPSTL (470 aa). C436 contributes to the heme binding site.

It belongs to the cytochrome P450 family. The cofactor is heme. As to expression, expressed in roots, stems, leaves and flower buds. Hardly detected in mature flowers and fruits. Expressed in the internal phloem-associated parenchyma.

The protein resides in the endoplasmic reticulum membrane. The catalysed reaction is (2E)-geraniol + reduced [NADPH--hemoprotein reductase] + O2 = (6E)-8-hydroxygeraniol + oxidized [NADPH--hemoprotein reductase] + H2O + H(+). In terms of biological role, hydroxylase involved in the biosynthesis of hydroxygeraniol, a precursor of the terpenoid indole alkaloids such as vinblastine and vincristine. Also able to hydroxylate in vitro nerol and to catalyze 3'-hydroxylation of the flavanone naringenin to form eriodictyol. No activity with apigenin, kaempferol, p-coumaric acid and ferulic acid as substrates. The protein is Geraniol 8-hydroxylase (CYP76B6) of Catharanthus roseus (Madagascar periwinkle).